The chain runs to 254 residues: 4-hydroxy-tetrahydrodipicolinate reductase (254 aa).

Residue 7 to 12 coordinates NAD(+); it reads GASGRI. Position 35 (Arg35) interacts with NADP(+). NAD(+)-binding positions include 91 to 93 and 115 to 118; these read GTT and AHNM. His147 (proton donor/acceptor) is an active-site residue. His148 lines the (S)-2,3,4,5-tetrahydrodipicolinate pocket. Residue Lys151 is the Proton donor of the active site. Position 157–158 (157–158) interacts with (S)-2,3,4,5-tetrahydrodipicolinate; it reads GT.

Belongs to the DapB family.

The protein localises to the cytoplasm. It carries out the reaction (S)-2,3,4,5-tetrahydrodipicolinate + NAD(+) + H2O = (2S,4S)-4-hydroxy-2,3,4,5-tetrahydrodipicolinate + NADH + H(+). The catalysed reaction is (S)-2,3,4,5-tetrahydrodipicolinate + NADP(+) + H2O = (2S,4S)-4-hydroxy-2,3,4,5-tetrahydrodipicolinate + NADPH + H(+). It participates in amino-acid biosynthesis; L-lysine biosynthesis via DAP pathway; (S)-tetrahydrodipicolinate from L-aspartate: step 4/4. In terms of biological role, catalyzes the conversion of 4-hydroxy-tetrahydrodipicolinate (HTPA) to tetrahydrodipicolinate. The polypeptide is 4-hydroxy-tetrahydrodipicolinate reductase (Helicobacter pylori (strain P12)).